The chain runs to 225 residues: Ribonuclease HII (225 aa).

An RNase H type-2 domain is found at 2–210 (GIVVGVDEAG…VRKLGGPWRS (209 aa)). 3 residues coordinate a divalent metal cation: aspartate 8, glutamate 9, and aspartate 107.

This sequence belongs to the RNase HII family. Mn(2+) is required as a cofactor. It depends on Mg(2+) as a cofactor.

The protein resides in the cytoplasm. It catalyses the reaction Endonucleolytic cleavage to 5'-phosphomonoester.. In terms of biological role, endonuclease that specifically degrades the RNA of RNA-DNA hybrids. This Aeropyrum pernix (strain ATCC 700893 / DSM 11879 / JCM 9820 / NBRC 100138 / K1) protein is Ribonuclease HII (rnhB).